We begin with the raw amino-acid sequence, 258 residues long: Snake venom serine protease BPA (258 aa).

The N-terminal stretch at 1-18 is a signal peptide; the sequence is MVLIRVIANLLILQLSNA. Residues 19–24 constitute a propeptide that is removed on maturation; the sequence is QKSSEL. The 225-residue stretch at 25-249 folds into the Peptidase S1 domain; sequence VIGGDECNIT…YLPWIQSIIA (225 aa). Cystine bridges form between C31–C163, C50–C66, C98–C256, C142–C210, C174–C189, and C200–C225. 2 N-linked (GlcNAc...) asparagine glycosylation sites follow: N32 and N44. The active-site Charge relay system is H65. The N-linked (GlcNAc...) asparagine glycan is linked to N103. Catalysis depends on D110, which acts as the Charge relay system. An N-linked (GlcNAc...) asparagine glycan is attached at N121. O-linked (GalNAc...) serine glycosylation occurs at S133. N154 and N170 each carry an N-linked (GlcNAc...) asparagine glycan. S204 functions as the Charge relay system in the catalytic mechanism. N-linked (GlcNAc...) asparagine glycans are attached at residues N211 and N251. The O-linked (GalNAc...) threonine glycan is linked to T255.

It belongs to the peptidase S1 family. Snake venom subfamily. As to quaternary structure, monomer. N- and O-glycosylated. The glycosylation has a stabilizing effect on the protein. However, the removal of part of the carbohydrates enhances the proteolytic activity of the SVSP towards human and rat fibrinogen. As to expression, expressed by the venom gland.

It is found in the secreted. With respect to regulation, inhibited by diisopropylfluorophosphate (DFP), but not by SBTI, Antithrombin III/heparin and BPTI, probably due to steric hindrance caused by its huge carbohydrate moietie. In terms of biological role, snake venom serine protease that has a potent and selective fibrinogenolytic activity. Preferentially cleaves the alpha-chain (FGA) of human and rat fibrinogen at Arg-|-Gly bonds, and slowly digests the beta-chain (FGB). In vivo, completely avoids thrombus formation induced in rat, decreases the fibrinogen plasma level and prolonges the recalcification time. Possesses esterolytic and amidolytic activities. The polypeptide is Snake venom serine protease BPA (Bothrops jararaca (Jararaca)).